The chain runs to 598 residues: MTALANIRNFSIIAHIDHGKSTLADRFIQMCGALQDREMQAQVLDSMDIERERGITIKAQSVTLYYDHPNGERYQLNFIDTPGHVDFSYEVSRSLAACEGALLVVDAAQGVEAQSVANCYTAVDQGLEVMAVLNKIDLPQVEPERVIQEIEDIIGIDAVDAPRVSAKSGLGVDKLLEALVEFIPAPTGDRDAPLQALIIDSWFDNYLGVVSLVRVRQGTIKKGDKLYIKSTKDAHLVGSIGVFTPKPLDTGILEAGEVGFIIAGIKDIAGAPVGDTITHASTPDVDCIPGFKQITPQVYAGMFPVESTDFEKFREALQKLQINDASLFFEPDTSDALGFGFRCGFLGMLHMEIIQERLEREYDLDLITTAPSVIYEIVKKDGSIIYVDNPSRLPEPNNIEEFREPIARCQILVPQDYLGNVMTLCIERRGVQVDMRFMGRQVQLIFDIPMGEVVMDFFDRLKSVSRGFASLDYNFERYQVDKLVKVDVLINGDKVDALAMIVHETQSRYRGNALVSKMKELIPRQMFDVAIQAAIGSQIIGRSTVKAMRKDVLAKCYGGDVSRKKKLLSKQKAGKKRMKQVGNVEIPQEAFLAVLQVD.

Residues 5–187 (ANIRNFSIIA…ALVEFIPAPT (183 aa)) enclose the tr-type G domain. GTP is bound by residues 17–22 (DHGKST) and 134–137 (NKID).

It belongs to the TRAFAC class translation factor GTPase superfamily. Classic translation factor GTPase family. LepA subfamily.

The protein localises to the cell inner membrane. The enzyme catalyses GTP + H2O = GDP + phosphate + H(+). Its function is as follows. Required for accurate and efficient protein synthesis under certain stress conditions. May act as a fidelity factor of the translation reaction, by catalyzing a one-codon backward translocation of tRNAs on improperly translocated ribosomes. Back-translocation proceeds from a post-translocation (POST) complex to a pre-translocation (PRE) complex, thus giving elongation factor G a second chance to translocate the tRNAs correctly. Binds to ribosomes in a GTP-dependent manner. The sequence is that of Elongation factor 4 from Psychrobacter arcticus (strain DSM 17307 / VKM B-2377 / 273-4).